A 441-amino-acid polypeptide reads, in one-letter code: Ribulose bisphosphate carboxylase large chain (441 aa).

Residues asparagine 89 and threonine 139 each contribute to the substrate site. Lysine 141 serves as the catalytic Proton acceptor. Position 143 (lysine 143) interacts with substrate. 3 residues coordinate Mg(2+): lysine 167, aspartate 169, and glutamate 170. The residue at position 167 (lysine 167) is an N6-carboxylysine. Histidine 260 functions as the Proton acceptor in the catalytic mechanism. 2 residues coordinate substrate: residue 261 and serine 345.

Belongs to the RuBisCO large chain family. Type I subfamily. In terms of assembly, heterohexadecamer of 8 large chains and 8 small chains; disulfide-linked. The disulfide link is formed within the large subunit homodimers. It depends on Mg(2+) as a cofactor. Post-translationally, the disulfide bond which can form in the large chain dimeric partners within the hexadecamer appears to be associated with oxidative stress and protein turnover.

It localises to the plastid. Its subcellular location is the chloroplast. The enzyme catalyses 2 (2R)-3-phosphoglycerate + 2 H(+) = D-ribulose 1,5-bisphosphate + CO2 + H2O. The catalysed reaction is D-ribulose 1,5-bisphosphate + O2 = 2-phosphoglycolate + (2R)-3-phosphoglycerate + 2 H(+). Functionally, ruBisCO catalyzes two reactions: the carboxylation of D-ribulose 1,5-bisphosphate, the primary event in carbon dioxide fixation, as well as the oxidative fragmentation of the pentose substrate in the photorespiration process. Both reactions occur simultaneously and in competition at the same active site. The chain is Ribulose bisphosphate carboxylase large chain from Asclepias exaltata (Poke milkweed).